A 391-amino-acid polypeptide reads, in one-letter code: DNA-directed RNA polymerase subunit Rpo1C (391 aa).

Belongs to the RNA polymerase beta' chain family. As to quaternary structure, part of the RNA polymerase complex.

It is found in the cytoplasm. It catalyses the reaction RNA(n) + a ribonucleoside 5'-triphosphate = RNA(n+1) + diphosphate. DNA-dependent RNA polymerase (RNAP) catalyzes the transcription of DNA into RNA using the four ribonucleoside triphosphates as substrates. Forms part of the jaw domain. The sequence is that of DNA-directed RNA polymerase subunit Rpo1C from Thermococcus onnurineus (strain NA1).